Consider the following 382-residue polypeptide: MSISIYEFFHYSLFLGLFVAFTYNKKQPPAFGAALAFWCILLSFLGLLFCHISNNLSNYNVLTANALFFYQISGTWSNHEGSILLWCWILNFYGFFFCYRGRPQSHNVLKQGGYRESLFFFFVLNFVKNSILSLLRYEQESGLKNQLYTPFVLRTLVDSELCSRRNRTFDGPALFYAPLYPERKIKNPLDAWRFRGSREGKRTHPLLHLARDDKERASSIDEQRIDGALGIALFFSFFLLASSDPFVRNFFVCTEPLAELNPVLQDPILAIHPPCIYAGDVASAEGFGLCRSKMMNGIVALHSPPMRKDAAEKNGTLLCSAGCVGSRITSELFTLKFKHVGAKCYPALLLRSNRSPLMLLRRRFFAFSSFWAGARSHSTKRY.

The next 4 helical transmembrane spans lie at 1-21 (MSIS…FVAF), 30-50 (AFGA…LLFC), 79-99 (HEGS…FFCY), and 117-137 (SLFF…LLRY).

Belongs to the CcmF/CycK/Ccl1/NrfE/CcsA family. In terms of assembly, interacts with CCMFN2 and CCMH.

The protein resides in the mitochondrion inner membrane. Forms a complex with CCMFC, CCMFN2 and CCMH that performs the assembly of heme with c-type apocytochromes in mitochondria. The sequence is that of Cytochrome c biogenesis CcmF N-terminal-like mitochondrial protein 1 from Arabidopsis thaliana (Mouse-ear cress).